The sequence spans 388 residues: Succinate--CoA ligase [ADP-forming] subunit beta (388 aa).

In terms of domain architecture, ATP-grasp spans 9 to 244; the sequence is KEILRKYNVP…LDEEDANEIE (236 aa). ATP contacts are provided by residues K46, 53–55, E99, A102, and E107; that span reads GRG. Residues N199 and D213 each coordinate Mg(2+). Substrate is bound by residues N264 and 321 to 323; that span reads GIM.

This sequence belongs to the succinate/malate CoA ligase beta subunit family. As to quaternary structure, heterotetramer of two alpha and two beta subunits. Mg(2+) is required as a cofactor.

It carries out the reaction succinate + ATP + CoA = succinyl-CoA + ADP + phosphate. The catalysed reaction is GTP + succinate + CoA = succinyl-CoA + GDP + phosphate. Its pathway is carbohydrate metabolism; tricarboxylic acid cycle; succinate from succinyl-CoA (ligase route): step 1/1. In terms of biological role, succinyl-CoA synthetase functions in the citric acid cycle (TCA), coupling the hydrolysis of succinyl-CoA to the synthesis of either ATP or GTP and thus represents the only step of substrate-level phosphorylation in the TCA. The beta subunit provides nucleotide specificity of the enzyme and binds the substrate succinate, while the binding sites for coenzyme A and phosphate are found in the alpha subunit. The polypeptide is Succinate--CoA ligase [ADP-forming] subunit beta (Cupriavidus taiwanensis (strain DSM 17343 / BCRC 17206 / CCUG 44338 / CIP 107171 / LMG 19424 / R1) (Ralstonia taiwanensis (strain LMG 19424))).